We begin with the raw amino-acid sequence, 446 residues long: Maltoporin (446 aa).

Residues 1–25 form the signal peptide; it reads MMITLRKLPLAVAVAAGVMSAQAMA.

Belongs to the porin LamB (TC 1.B.3) family. In terms of assembly, homotrimer formed of three 18-stranded antiparallel beta-barrels, containing three independent channels.

It localises to the cell outer membrane. It catalyses the reaction beta-maltose(in) = beta-maltose(out). Functionally, involved in the transport of maltose and maltodextrins. In Escherichia coli (strain SE11), this protein is Maltoporin.